A 216-amino-acid polypeptide reads, in one-letter code: 3-isopropylmalate dehydratase small subunit (216 aa).

This sequence belongs to the LeuD family. LeuD type 1 subfamily. As to quaternary structure, heterodimer of LeuC and LeuD.

It carries out the reaction (2R,3S)-3-isopropylmalate = (2S)-2-isopropylmalate. It participates in amino-acid biosynthesis; L-leucine biosynthesis; L-leucine from 3-methyl-2-oxobutanoate: step 2/4. Its function is as follows. Catalyzes the isomerization between 2-isopropylmalate and 3-isopropylmalate, via the formation of 2-isopropylmaleate. The polypeptide is 3-isopropylmalate dehydratase small subunit (Burkholderia ambifaria (strain MC40-6)).